A 319-amino-acid chain; its full sequence is Transcriptional regulator LsrR (319 aa).

A DNA-binding region (H-T-H motif) is located at residues 32-55; it reads QSEISERLGLTRLKVSRLLEKGHQ.

Belongs to the SorC transcriptional regulatory family.

Its subcellular location is the cytoplasm. Inactivated by phosphorylated autoinducer-2 (phospho-AI-2). Phospho-AI-2 acts by binding to LsrR, which is then unable to bind to the promoter regions, allowing the transcription of the target genes. Its function is as follows. Transcriptional regulator that represses the expression of the lsr operon (lsrACDBFGE) in the absence of the quorum-sensing signaling molecule autoinducer 2 (AI-2). It also represses the expression of the lsrRK operon. Acts by binding to the intergenic region between the lsr operon and lsrR. In the presence of phosphorylated autoinducer-2 (phospho-AI-2), LsrR is inactivated, leading to the transcription of the genes. The regulatory function of LsrR was thought to be limited to the lsr operon, but it was subsequently shown to be involved, directly or indirectly, in the regulation of SPI-1 and flagella genes. It negatively regulates the expression of those genes, which reduces the ability of Salmonella to invade host cells. The chain is Transcriptional regulator LsrR from Salmonella typhimurium (strain LT2 / SGSC1412 / ATCC 700720).